A 257-amino-acid polypeptide reads, in one-letter code: Glucose-1-phosphate cytidylyltransferase (257 aa).

Substrate contacts are provided by residues L6–L10, G11–R13, K23, S104, R109, and G128. The Mg(2+) site is built by D129 and D234.

It belongs to the glucose-1-phosphate cytidylyltransferase family. In terms of assembly, homohexamer. Mg(2+) is required as a cofactor.

The catalysed reaction is alpha-D-glucose 1-phosphate + CTP + H(+) = CDP-D-glucose + diphosphate. It participates in nucleotide-sugar biosynthesis; CDP-3,6-dideoxy-D-mannose biosynthesis; CDP-3,6-dideoxy-D-mannose from CTP and alpha-D-glucose 1-phosphate: step 1/5. The protein operates within bacterial outer membrane biogenesis; LPS O-antigen biosynthesis. Functionally, involved in the biosynthesis of the tyvelose, a 3,6-dideoxyhexose found in the O-antigen of the surface lipopolysaccharides. It catalyzes the transfer of a CMP moiety from CTP to glucose 1-phosphate. This enzyme can utilize either CTP or UTP as the nucleotide donor. This Salmonella typhi protein is Glucose-1-phosphate cytidylyltransferase (rfbF).